Consider the following 794-residue polypeptide: Protein IQ-DOMAIN 32 (794 aa).

Residues 15-101 (CSGGDDTSAD…QSFSVDEKKS (87 aa)) are disordered. 2 stretches are compositionally biased toward polar residues: residues 23–33 (ADPNSTALENK) and 56–65 (SVVSETTPAS). A phosphoserine mark is found at Ser-78, Ser-80, Ser-142, Ser-193, and Ser-195. Residues 80 to 95 (SPDNNNVSEKQQQSFS) show a composition bias toward polar residues. IQ domains are found at residues 214–242 (DESVIVVIQAAVRGFLARRELLRSKKVIK) and 243–265 (LQAAVRGHLVRSQAMGSLRCVQA). A calmodulin-binding region spans residues 230–241 (ARRELLRSKKVI). Residues 277–296 (HSTKDGSRVSATSDKSEPNA) form a disordered region. At Ser-369 the chain carries Phosphoserine. Residues 375–417 (VNSDSTVENKTETDMPSYEASKVEGQNVELSETEKMSQYDSPE) are disordered. The residue at position 459 (Ser-459) is a Phosphoserine. 2 disordered regions span residues 472 to 555 (ELTS…RVEA) and 578 to 794 (ATSM…KWQR). A compositionally biased stretch (polar residues) spans 473-486 (LTSSTGSNKAMTLS). The span at 487-500 (SKDDVLGEEGKTDI) shows a compositional bias: basic and acidic residues. 2 positions are modified to phosphoserine: Ser-502 and Ser-544. Basic and acidic residues-rich tracts occupy residues 539–555 (TLEKKSDAEGAEPRVEA) and 585–607 (EDPKEKVENAKDEVEISATHHEP). Low complexity predominate over residues 643–654 (SQATPASQASSS). A Nuclear localization signal motif is present at residues 657–664 (ARKGKSEK). The segment covering 768 to 786 (NGKQVSPRIQRSASQAQQG) has biased composition (polar residues).

The protein belongs to the IQD family. Binds to multiple calmodulin (CaM) in the presence of Ca(2+) and CaM-like proteins.

It localises to the nucleus. The protein resides in the cytoplasm. The protein localises to the cytoskeleton. May be involved in cooperative interactions with calmodulins or calmodulin-like proteins. Recruits calmodulin proteins to microtubules, thus being a potential scaffold in cellular signaling and trafficking. May associate with nucleic acids and regulate gene expression at the transcriptional or post-transcriptional level. The chain is Protein IQ-DOMAIN 32 from Arabidopsis thaliana (Mouse-ear cress).